We begin with the raw amino-acid sequence, 503 residues long: ATP synthase subunit alpha (503 aa).

170 to 177 (GDKQTGKT) lines the ATP pocket.

The protein belongs to the ATPase alpha/beta chains family. In terms of assembly, F-type ATPases have 2 components, CF(1) - the catalytic core - and CF(0) - the membrane proton channel. CF(1) has five subunits: alpha(3), beta(3), gamma(1), delta(1), epsilon(1). CF(0) has three main subunits: a(1), b(2) and c(9-12). The alpha and beta chains form an alternating ring which encloses part of the gamma chain. CF(1) is attached to CF(0) by a central stalk formed by the gamma and epsilon chains, while a peripheral stalk is formed by the delta and b chains.

The protein localises to the cell inner membrane. It carries out the reaction ATP + H2O + 4 H(+)(in) = ADP + phosphate + 5 H(+)(out). In terms of biological role, produces ATP from ADP in the presence of a proton gradient across the membrane. The alpha chain is a regulatory subunit. The sequence is that of ATP synthase subunit alpha from Helicobacter pylori (strain J99 / ATCC 700824) (Campylobacter pylori J99).